The sequence spans 600 residues: Prostaglandin G/H synthase 1 (600 aa).

The N-terminal stretch at 1–24 (MSRQSISLRFPLLLLLLSPSPVFS) is a signal peptide. The EGF-like domain occupies 32–70 (PVNPCCYYPCQHQGICVRFGLDRYQCDCTRTGYSGPNCT). Cystine bridges form between C36–C47, C37–C159, C41–C57, and C59–C69. An N-linked (GlcNAc...) asparagine glycan is attached at N68. The next 4 membrane-spanning stretches (helical) occupy residues 74–82 (IWTWLRTTL), 86–92 (PSFIHFL), 97–105 (RWLWDFVNA), and 108–122 (IRDT…VRSN). A glycan (N-linked (GlcNAc...) asparagine) is linked at N144. The active-site Proton acceptor is the H207. The active-site For cyclooxygenase activity is the Y385. A heme b-binding site is contributed by H388. The N-linked (GlcNAc...) asparagine glycan is linked to N410. A disulfide bond links C569 and C575.

The protein belongs to the prostaglandin G/H synthase family. In terms of assembly, homodimer. Heme b is required as a cofactor.

The protein localises to the endoplasmic reticulum membrane. It localises to the microsome membrane. The enzyme catalyses (5Z,8Z,11Z,14Z)-eicosatetraenoate + AH2 + 2 O2 = prostaglandin H2 + A + H2O. The catalysed reaction is (5Z,8Z,11Z,14Z)-eicosatetraenoate + 2 O2 = prostaglandin G2. It catalyses the reaction prostaglandin G2 + AH2 = prostaglandin H2 + A + H2O. It carries out the reaction (9Z,12Z)-octadecadienoate + AH2 + O2 = (9R)-hydroxy-(10E,12Z)-octadecadienoate + A + H2O. The enzyme catalyses (9Z,12Z)-octadecadienoate + AH2 + O2 = (9S)-hydroxy-(10E,12Z)-octadecadienoate + A + H2O. The catalysed reaction is (9Z,12Z)-octadecadienoate + AH2 + O2 = (13S)-hydroxy-(9Z,11E)-octadecadienoate + A + H2O. It catalyses the reaction (9Z,12Z)-octadecadienoate + AH2 + O2 = (13R)-hydroxy-(9Z,11E)-octadecadienoate + A + H2O. The protein operates within lipid metabolism; prostaglandin biosynthesis. The cyclooxygenase activity is inhibited by nonsteroidal anti-inflammatory drugs (NSAIDs) including ibuprofen, flurbiprofen, ketoprofen, naproxen, flurbiprofen, anirolac, fenclofenac and diclofenac. Dual cyclooxygenase and peroxidase that plays an important role in the biosynthesis pathway of prostanoids, a class of C20 oxylipins mainly derived from arachidonate ((5Z,8Z,11Z,14Z)-eicosatetraenoate, AA, C20:4(n-6)), with a particular role in the inflammatory response. The cyclooxygenase activity oxygenates AA to the hydroperoxy endoperoxide prostaglandin G2 (PGG2), and the peroxidase activity reduces PGG2 to the hydroxy endoperoxide prostaglandin H2 (PGH2), the precursor of all 2-series prostaglandins and thromboxanes. This complex transformation is initiated by abstraction of hydrogen at carbon 13 (with S-stereochemistry), followed by insertion of molecular O2 to form the endoperoxide bridge between carbon 9 and 11 that defines prostaglandins. The insertion of a second molecule of O2 (bis-oxygenase activity) yields a hydroperoxy group in PGG2 that is then reduced to PGH2 by two electrons. Involved in the constitutive production of prostanoids in particular in the stomach and platelets. In gastric epithelial cells, it is a key step in the generation of prostaglandins, such as prostaglandin E2 (PGE2), which plays an important role in cytoprotection. In platelets, it is involved in the generation of thromboxane A2 (TXA2), which promotes platelet activation and aggregation, vasoconstriction and proliferation of vascular smooth muscle cells. Can also use linoleate (LA, (9Z,12Z)-octadecadienoate, C18:2(n-6)) as substrate and produce hydroxyoctadecadienoates (HODEs) in a regio- and stereospecific manner, being (9R)-HODE ((9R)-hydroxy-(10E,12Z)-octadecadienoate) and (13S)-HODE ((13S)-hydroxy-(9Z,11E)-octadecadienoate) its major products. This is Prostaglandin G/H synthase 1 (PTGS1) from Ovis aries (Sheep).